The following is a 278-amino-acid chain: uncharacterized protein (278 aa).

Over 1 to 34 (MAKTIKVIRKKDPKKKNLSDPLAKQKLVWKIGHV) the chain is Cytoplasmic. Residues 35 to 55 (LTLVFGLLFSITYFYHVLIFF) traverse the membrane as a helical segment. At 56–129 (KYRSWKWLFL…DLLSSENFHT (74 aa)) the chain is on the extracellular side. Residues 130 to 150 (LLIACLWFFGGGKSFYKILPY) form a helical membrane-spanning segment. Residues 151 to 180 (MILSYLHLTKMNYELNANKEEKIPLTPKDR) lie on the Cytoplasmic side of the membrane. The helical transmembrane segment at 181 to 201 (KMLHLLAYSELLVILALTLDT) threads the bilayer. At 202-205 (ILFK) the chain is on the extracellular side. Residues 206 to 222 (TGTSGFMLVIYVGIYWL) traverse the membrane as a helical segment. Topologically, residues 223 to 278 (RLNFSPYAQVAVLELLVKFEKYVPKKYRDKWQVIKNFIYMKMKEHEKRTEEVARYA) are cytoplasmic.

Its subcellular location is the cell membrane. This is an uncharacterized protein from Saccharomyces cerevisiae (strain ATCC 204508 / S288c) (Baker's yeast).